The sequence spans 142 residues: Large ribosomal subunit protein uL13 (142 aa).

The protein belongs to the universal ribosomal protein uL13 family. As to quaternary structure, part of the 50S ribosomal subunit.

Its function is as follows. This protein is one of the early assembly proteins of the 50S ribosomal subunit, although it is not seen to bind rRNA by itself. It is important during the early stages of 50S assembly. This Acinetobacter baumannii (strain AB0057) protein is Large ribosomal subunit protein uL13.